The primary structure comprises 309 residues: HPr kinase/phosphorylase (309 aa).

Active-site residues include H138 and K159. 153-160 contacts ATP; that stretch reads GQSGVGKS. Mg(2+) is bound at residue S160. The Proton acceptor; for phosphorylation activity. Proton donor; for dephosphorylation activity role is filled by D177. Positions 201–210 are important for the catalytic mechanism of both phosphorylation and dephosphorylation; sequence LEIRGLGIIN. E202 is a binding site for Mg(2+). R243 is a catalytic residue. An important for the catalytic mechanism of dephosphorylation region spans residues 264–269; the sequence is PVRPGR.

The protein belongs to the HPrK/P family. As to quaternary structure, homohexamer. Mg(2+) is required as a cofactor.

It catalyses the reaction [HPr protein]-L-serine + ATP = [HPr protein]-O-phospho-L-serine + ADP + H(+). The enzyme catalyses [HPr protein]-O-phospho-L-serine + phosphate + H(+) = [HPr protein]-L-serine + diphosphate. Functionally, catalyzes the ATP- as well as the pyrophosphate-dependent phosphorylation of a specific serine residue in HPr, a phosphocarrier protein of the phosphoenolpyruvate-dependent sugar phosphotransferase system (PTS). HprK/P also catalyzes the pyrophosphate-producing, inorganic phosphate-dependent dephosphorylation (phosphorolysis) of seryl-phosphorylated HPr (P-Ser-HPr). The two antagonistic activities of HprK/P are regulated by several intracellular metabolites, which change their concentration in response to the absence or presence of rapidly metabolisable carbon sources (glucose, fructose, etc.) in the growth medium. Also phosphorylates/dephosphorylates the HPr-like catabolite repression protein crh on a specific serine residue. Therefore, by controlling the phosphorylation state of HPr and crh, HPrK/P is a sensor enzyme that plays a major role in the regulation of carbon metabolism and sugar transport: it mediates carbon catabolite repression (CCR), and regulates PTS-catalyzed carbohydrate uptake and inducer exclusion. The protein is HPr kinase/phosphorylase of Bacillus mycoides (strain KBAB4) (Bacillus weihenstephanensis).